The sequence spans 430 residues: Enolase (430 aa).

Glutamine 163 contributes to the (2R)-2-phosphoglycerate binding site. Catalysis depends on glutamate 205, which acts as the Proton donor. The Mg(2+) site is built by aspartate 242, glutamate 288, and aspartate 315. Positions 340, 369, 370, and 391 each coordinate (2R)-2-phosphoglycerate. Lysine 340 functions as the Proton acceptor in the catalytic mechanism.

Belongs to the enolase family. Mg(2+) is required as a cofactor.

The protein localises to the cytoplasm. It is found in the secreted. Its subcellular location is the cell surface. It catalyses the reaction (2R)-2-phosphoglycerate = phosphoenolpyruvate + H2O. It participates in carbohydrate degradation; glycolysis; pyruvate from D-glyceraldehyde 3-phosphate: step 4/5. In terms of biological role, catalyzes the reversible conversion of 2-phosphoglycerate (2-PG) into phosphoenolpyruvate (PEP). It is essential for the degradation of carbohydrates via glycolysis. The sequence is that of Enolase from Acidobacterium capsulatum (strain ATCC 51196 / DSM 11244 / BCRC 80197 / JCM 7670 / NBRC 15755 / NCIMB 13165 / 161).